A 286-amino-acid polypeptide reads, in one-letter code: Bifunctional protein FolD (286 aa).

NADP(+)-binding positions include 165-167 and S190; that span reads GRS.

The protein belongs to the tetrahydrofolate dehydrogenase/cyclohydrolase family. Homodimer.

It carries out the reaction (6R)-5,10-methylene-5,6,7,8-tetrahydrofolate + NADP(+) = (6R)-5,10-methenyltetrahydrofolate + NADPH. It catalyses the reaction (6R)-5,10-methenyltetrahydrofolate + H2O = (6R)-10-formyltetrahydrofolate + H(+). It functions in the pathway one-carbon metabolism; tetrahydrofolate interconversion. Functionally, catalyzes the oxidation of 5,10-methylenetetrahydrofolate to 5,10-methenyltetrahydrofolate and then the hydrolysis of 5,10-methenyltetrahydrofolate to 10-formyltetrahydrofolate. The sequence is that of Bifunctional protein FolD from Burkholderia orbicola (strain MC0-3).